Reading from the N-terminus, the 451-residue chain is Zinc metalloproteinase nas-16 (451 aa).

The Peptidase M12A domain occupies 70-273 (QVVTKLFSPQ…LTINTAYNCK (204 aa)). Disulfide bonds link Cys-127/Cys-272, Cys-148/Cys-167, Cys-274/Cys-291, and Cys-296/Cys-305. N-linked (GlcNAc...) asparagine glycosylation occurs at Asn-133. His-175 contributes to the Zn(2+) binding site. Residue Glu-176 is part of the active site. Zn(2+)-binding residues include His-179 and His-185. The EGF-like domain maps to 267–306 (NTAYNCKCPSELLCANGGYTNPSNCLECICPLGYGGVLCD). N-linked (GlcNAc...) asparagine glycosylation is found at Asn-363 and Asn-438.

Zn(2+) serves as cofactor.

It localises to the secreted. In terms of biological role, metalloprotease. This Caenorhabditis elegans protein is Zinc metalloproteinase nas-16 (nas-16).